The primary structure comprises 205 residues: MIGRLRGAVAEVGEEEALIDVMGVGYLVRCGHRTLQRLPALGEETLLHIESQWSESAGLRLYGFLTREDRRAFVLLQAIQGVGPKAAMAVLDVLSPAELASAVAREDKAAVGRANGVGPKLALRIVTELKDKPITDGPVLMSAPTSSAPSAPAKPAPTGDAVAALMGLGVAEVNARRVVEAAAAELGEEATVQALIKAGLKELGR.

The segment at 1–65 (MIGRLRGAVA…SAGLRLYGFL (65 aa)) is domain I. The interval 66 to 144 (TREDRRAFVL…TDGPVLMSAP (79 aa)) is domain II. Residues 145–153 (TSSAPSAPA) are flexible linker. The domain III stretch occupies residues 153–205 (AKPAPTGDAVAALMGLGVAEVNARRVVEAAAAELGEEATVQALIKAGLKELGR).

This sequence belongs to the RuvA family. Homotetramer. Forms an RuvA(8)-RuvB(12)-Holliday junction (HJ) complex. HJ DNA is sandwiched between 2 RuvA tetramers; dsDNA enters through RuvA and exits via RuvB. An RuvB hexamer assembles on each DNA strand where it exits the tetramer. Each RuvB hexamer is contacted by two RuvA subunits (via domain III) on 2 adjacent RuvB subunits; this complex drives branch migration. In the full resolvosome a probable DNA-RuvA(4)-RuvB(12)-RuvC(2) complex forms which resolves the HJ.

The protein resides in the cytoplasm. Its function is as follows. The RuvA-RuvB-RuvC complex processes Holliday junction (HJ) DNA during genetic recombination and DNA repair, while the RuvA-RuvB complex plays an important role in the rescue of blocked DNA replication forks via replication fork reversal (RFR). RuvA specifically binds to HJ cruciform DNA, conferring on it an open structure. The RuvB hexamer acts as an ATP-dependent pump, pulling dsDNA into and through the RuvAB complex. HJ branch migration allows RuvC to scan DNA until it finds its consensus sequence, where it cleaves and resolves the cruciform DNA. In Caulobacter vibrioides (strain ATCC 19089 / CIP 103742 / CB 15) (Caulobacter crescentus), this protein is Holliday junction branch migration complex subunit RuvA.